A 393-amino-acid polypeptide reads, in one-letter code: S-adenosylmethionine synthase (393 aa).

Residue histidine 16 participates in ATP binding. Residue aspartate 18 participates in Mg(2+) binding. Glutamate 44 lines the K(+) pocket. L-methionine is bound by residues glutamate 57 and glutamine 100. Residues 100 to 110 (QSPDIVMGVDG) are flexible loop. Residues 165-167 (DAK), 231-232 (RF), aspartate 240, 246-247 (RK), and lysine 267 each bind ATP. Aspartate 240 serves as a coordination point for L-methionine. An L-methionine-binding site is contributed by lysine 271.

Belongs to the AdoMet synthase family. As to quaternary structure, homotetramer; dimer of dimers. Mg(2+) is required as a cofactor. Requires K(+) as cofactor.

The protein resides in the cytoplasm. It carries out the reaction L-methionine + ATP + H2O = S-adenosyl-L-methionine + phosphate + diphosphate. It functions in the pathway amino-acid biosynthesis; S-adenosyl-L-methionine biosynthesis; S-adenosyl-L-methionine from L-methionine: step 1/1. Functionally, catalyzes the formation of S-adenosylmethionine (AdoMet) from methionine and ATP. The overall synthetic reaction is composed of two sequential steps, AdoMet formation and the subsequent tripolyphosphate hydrolysis which occurs prior to release of AdoMet from the enzyme. The polypeptide is S-adenosylmethionine synthase (Coxiella burnetii (strain Dugway 5J108-111)).